The sequence spans 916 residues: Nitrate reductase [NADH] 1 (916 aa).

The interval 1-77 (MAASVQPRQF…DDEEEEQEDW (77 aa)) is disordered. A compositionally biased stretch (acidic residues) spans 66-76 (GSDDEEEEQED). Mo-molybdopterin is bound at residue C192. One can recognise a Cytochrome b5 heme-binding domain in the interval 541–616 (GKQFTMSEVR…LDTYRIGELI (76 aa)). Heme is bound by residues H576 and H599. One can recognise an FAD-binding FR-type domain in the interval 656–768 (RDKVPCQLVD…KGPLGHVEYT (113 aa)). FAD contacts are provided by residues 708 to 711 (RAYT), 725 to 729 (LIKVY), F730, F737, 742 to 744 (LMT), S792, and T795.

It belongs to the nitrate reductase family. Homodimer. It depends on FAD as a cofactor. Heme serves as cofactor. Mo-molybdopterin is required as a cofactor.

It catalyses the reaction nitrite + NAD(+) + H2O = nitrate + NADH + H(+). Its function is as follows. Nitrate reductase is a key enzyme involved in the first step of nitrate assimilation in plants, fungi and bacteria. The polypeptide is Nitrate reductase [NADH] 1 (NIA1) (Oryza sativa subsp. japonica (Rice)).